Consider the following 277-residue polypeptide: Putative ankyrin repeat protein L81 (277 aa).

2 ANK repeats span residues 150-179 and 183-215; these read FGQTPMWIATTRCNYRNYVFLKKHGSDLHQ and QGRSLLHATANAVNSECLDIFKDLIANGVDLYQ.

The chain is Putative ankyrin repeat protein L81 from Acanthamoeba polyphaga (Amoeba).